A 321-amino-acid polypeptide reads, in one-letter code: Probable arabinan endo-1,5-alpha-L-arabinosidase A (321 aa).

An N-terminal signal peptide occupies residues 1-19 (MSASAFVAVASCLAALVHG). D34 serves as the catalytic Proton acceptor. Catalysis depends on E200, which acts as the Proton donor.

Belongs to the glycosyl hydrolase 43 family.

It is found in the secreted. The enzyme catalyses Endohydrolysis of (1-&gt;5)-alpha-arabinofuranosidic linkages in (1-&gt;5)-arabinans.. The protein operates within glycan metabolism; L-arabinan degradation. Its function is as follows. Endo-1,5-alpha-L-arabinanase involved in degradation of pectin. Its preferred substrate is linear 1,5-alpha-L-arabinan. The sequence is that of Probable arabinan endo-1,5-alpha-L-arabinosidase A (abnA) from Neosartorya fischeri (strain ATCC 1020 / DSM 3700 / CBS 544.65 / FGSC A1164 / JCM 1740 / NRRL 181 / WB 181) (Aspergillus fischerianus).